A 217-amino-acid polypeptide reads, in one-letter code: MNTEQFDPMTFALFLGALSLIPMLMIVCTCFLKISMVLLITRNAIGVQQVPPNMALYGIALAATLFVMAPVFNQMQQQFSQVPADLSSMDNLKTSVTNGVAPLQKFMTHNTDPDILIHLQENSVRMWPKEMSDSVNKDNLLLVIPAFVLSELQAGFKIGFLIYIPFIVIDLIVSNVLLALGMQMVAPMTLSLPLKMLLFVLINGWTRLLDGLFYSYL.

A run of 4 helical transmembrane segments spans residues 11–31, 52–72, 158–178, and 185–205; these read FALF…CTCF, PNMA…APVF, IGFL…NVLL, and VAPM…INGW.

Belongs to the FliP/MopC/SpaP family.

It localises to the cell membrane. Required for the secretion of harpin. The protein is Harpin secretion protein HrcR (hrcR) of Erwinia amylovora (Fire blight bacteria).